A 419-amino-acid polypeptide reads, in one-letter code: Queuine tRNA-ribosyltransferase accessory subunit 2 (419 aa).

Zn(2+)-binding residues include Cys326, Cys328, Cys331, and His357.

It belongs to the queuine tRNA-ribosyltransferase family. QTRT2 subfamily. Heterodimer of a catalytic subunit and an accessory subunit. Zn(2+) is required as a cofactor.

The protein localises to the cytoplasm. In terms of biological role, non-catalytic subunit of the queuine tRNA-ribosyltransferase (TGT) that catalyzes the base-exchange of a guanine (G) residue with queuine (Q) at position 34 (anticodon wobble position) in tRNAs with GU(N) anticodons (tRNA-Asp, -Asn, -His and -Tyr), resulting in the hypermodified nucleoside queuosine (7-(((4,5-cis-dihydroxy-2-cyclopenten-1-yl)amino)methyl)-7-deazaguanosine). The protein is Queuine tRNA-ribosyltransferase accessory subunit 2 of Drosophila grimshawi (Hawaiian fruit fly).